Here is a 111-residue protein sequence, read N- to C-terminus: Translation initiation factor 1A (111 aa).

Over residues 1–13 (MKKSNNKNNHKNN) the composition is skewed to basic residues. Residues 1–30 (MKKSNNKNNHKNNHNNNQGGENIRVRSPRR) form a disordered region. Residues 23–96 (IRVRSPRRGE…EKADVIWRYT (74 aa)) form the S1-like domain.

This sequence belongs to the eIF-1A family.

Functionally, seems to be required for maximal rate of protein biosynthesis. Enhances ribosome dissociation into subunits and stabilizes the binding of the initiator Met-tRNA(I) to 40 S ribosomal subunits. This chain is Translation initiation factor 1A, found in Methanosphaera stadtmanae (strain ATCC 43021 / DSM 3091 / JCM 11832 / MCB-3).